Here is a 1378-residue protein sequence, read N- to C-terminus: DNA-directed RNA polymerase subunit beta (1378 aa).

Belongs to the RNA polymerase beta chain family. As to quaternary structure, the RNAP catalytic core consists of 2 alpha, 1 beta, 1 beta' and 1 omega subunit. When a sigma factor is associated with the core the holoenzyme is formed, which can initiate transcription.

The enzyme catalyses RNA(n) + a ribonucleoside 5'-triphosphate = RNA(n+1) + diphosphate. In terms of biological role, DNA-dependent RNA polymerase catalyzes the transcription of DNA into RNA using the four ribonucleoside triphosphates as substrates. The polypeptide is DNA-directed RNA polymerase subunit beta (Campylobacter jejuni subsp. jejuni serotype O:23/36 (strain 81-176)).